The primary structure comprises 247 residues: Epidermal cell differentiation inhibitor (247 aa).

The signal sequence occupies residues 1–35 (MKNKLLFKIFLSLSLALSVYSINDKIIEVSNTSLA). Positions 39 to 247 (KNFTDLDEAT…IIITAIVFKK (209 aa)) constitute a TR mART core domain. Residues Arg-120, Ser-173, and Glu-215 contribute to the active site.

To ADP-ribosyltransferase C3 of Clostridium.

Inhibits terminal differentiation of cultured mouse keratinocytes. In culture, also inhibits the differentiation of human keratinocytes. Probable ADP-ribosyltransferase. In Staphylococcus aureus, this protein is Epidermal cell differentiation inhibitor.